We begin with the raw amino-acid sequence, 30 residues long: Photosystem I reaction center subunit XII (30 aa).

A helical transmembrane segment spans residues 6-26 (VFTILAIALVPAVMALLLGSA).

It belongs to the PsaM family.

It is found in the cellular thylakoid membrane. The sequence is that of Photosystem I reaction center subunit XII from Synechococcus sp. (strain JA-2-3B'a(2-13)) (Cyanobacteria bacterium Yellowstone B-Prime).